Consider the following 272-residue polypeptide: Indole-3-glycerol phosphate synthase (272 aa).

The protein belongs to the TrpC family.

The enzyme catalyses 1-(2-carboxyphenylamino)-1-deoxy-D-ribulose 5-phosphate + H(+) = (1S,2R)-1-C-(indol-3-yl)glycerol 3-phosphate + CO2 + H2O. Its pathway is amino-acid biosynthesis; L-tryptophan biosynthesis; L-tryptophan from chorismate: step 4/5. This chain is Indole-3-glycerol phosphate synthase, found in Mycobacteroides abscessus (strain ATCC 19977 / DSM 44196 / CCUG 20993 / CIP 104536 / JCM 13569 / NCTC 13031 / TMC 1543 / L948) (Mycobacterium abscessus).